Consider the following 438-residue polypeptide: MYLIADWRRTHYSEEVIPEMDGQEVILMGWVHSIRALGKLAFVILRDREGTIQAVVPKQKVDEETFEIAKKLGKEDIIAIRGKVVANEKAPKGFEVIPIEIRVLNKADAPLPLDPSEKVPAEIDTRLDKRFLDIRRPKIQAIFKIRSEMLRSIRKTFADEGFVEVNTPKLVASATEGGTELFPISYFEKEAFLGQSPQLYKQMMMAGGFDKVFEIAQIFRAEEHNTRRHLNEAVSIDTEMSFVNEKDAMAMLEKVVYNCYADIEYNRPQEIELLELNWEIPEKTFDKLTYTEAIDIAISKGVEIEWGEDLSRAAERAVGDEMGGLYFITEWPTQTRPFYTLPHENDNKVCKAFDLMYKELEISSGAQRVHKYDLLVENISNMGMNPDSFETYLEAFKFGMPPHAGWGLGADRFAMVLTAQDNIRECVLFPRDRQRLTP.

An L-aspartate-binding site is contributed by Glu176. The segment at Gln198 to Lys201 is aspartate. Arg220 is an L-aspartate binding site. Residues Arg220 to Glu222, Arg228 to Leu230, and Glu361 contribute to the ATP site. 2 residues coordinate Mg(2+): Glu361 and Ser364. Ser364 and Arg368 together coordinate L-aspartate. An ATP-binding site is contributed by Gly409–Arg412.

This sequence belongs to the class-II aminoacyl-tRNA synthetase family. Type 2 subfamily. As to quaternary structure, homodimer. Requires Mg(2+) as cofactor.

The protein localises to the cytoplasm. It carries out the reaction tRNA(Asx) + L-aspartate + ATP = L-aspartyl-tRNA(Asx) + AMP + diphosphate. In terms of biological role, aspartyl-tRNA synthetase with relaxed tRNA specificity since it is able to aspartylate not only its cognate tRNA(Asp) but also tRNA(Asn). Reaction proceeds in two steps: L-aspartate is first activated by ATP to form Asp-AMP and then transferred to the acceptor end of tRNA(Asp/Asn). The chain is Aspartate--tRNA(Asp/Asn) ligase from Methanococcus maripaludis (strain C7 / ATCC BAA-1331).